A 319-amino-acid chain; its full sequence is Cytochrome f (319 aa).

The first 34 residues, 1–34 (MQNRNTYEWAKKMTRLISVLVMIHIITRTSISNA), serve as a signal peptide directing secretion. The heme site is built by Y35, C55, C58, and H59. The helical transmembrane segment at 287-304 (GLLLFLASVILAQIFLVL) threads the bilayer.

It belongs to the cytochrome f family. As to quaternary structure, the 4 large subunits of the cytochrome b6-f complex are cytochrome b6, subunit IV (17 kDa polypeptide, petD), cytochrome f and the Rieske protein, while the 4 small subunits are PetG, PetL, PetM and PetN. The complex functions as a dimer. Requires heme as cofactor.

It localises to the plastid. Its subcellular location is the chloroplast thylakoid membrane. Functionally, component of the cytochrome b6-f complex, which mediates electron transfer between photosystem II (PSII) and photosystem I (PSI), cyclic electron flow around PSI, and state transitions. This Pinus thunbergii (Japanese black pine) protein is Cytochrome f (petA).